The sequence spans 436 residues: Kynureninase (436 aa).

Pyridoxal 5'-phosphate contacts are provided by residues Leu88, Thr89, Phe116 to Asp119, Asp202, His205, and Tyr227. An N6-(pyridoxal phosphate)lysine modification is found at Lys228. Pyridoxal 5'-phosphate-binding residues include Trp280 and Asn308.

It belongs to the kynureninase family. As to quaternary structure, homodimer. The cofactor is pyridoxal 5'-phosphate.

Its subcellular location is the cytoplasm. It carries out the reaction L-kynurenine + H2O = anthranilate + L-alanine + H(+). The catalysed reaction is 3-hydroxy-L-kynurenine + H2O = 3-hydroxyanthranilate + L-alanine + H(+). It functions in the pathway amino-acid degradation; L-kynurenine degradation; L-alanine and anthranilate from L-kynurenine: step 1/1. The protein operates within cofactor biosynthesis; NAD(+) biosynthesis; quinolinate from L-kynurenine: step 2/3. Functionally, catalyzes the cleavage of L-kynurenine (L-Kyn) and L-3-hydroxykynurenine (L-3OHKyn) into anthranilic acid (AA) and 3-hydroxyanthranilic acid (3-OHAA), respectively. The protein is Kynureninase of Schistosoma japonicum (Blood fluke).